A 359-amino-acid polypeptide reads, in one-letter code: Peptide chain release factor 1 (359 aa).

Glutamine 235 carries the post-translational modification N5-methylglutamine.

This sequence belongs to the prokaryotic/mitochondrial release factor family. Methylated by PrmC. Methylation increases the termination efficiency of RF1.

Its subcellular location is the cytoplasm. Functionally, peptide chain release factor 1 directs the termination of translation in response to the peptide chain termination codons UAG and UAA. This Chelativorans sp. (strain BNC1) protein is Peptide chain release factor 1.